The sequence spans 251 residues: Triosephosphate isomerase (251 aa).

Substrate is bound at residue 9 to 11 (NWK). The active-site Electrophile is H96. Residue E168 is the Proton acceptor of the active site. Residues G174, S214, and 235 to 236 (GG) each bind substrate.

Belongs to the triosephosphate isomerase family. In terms of assembly, homodimer.

The protein resides in the cytoplasm. It carries out the reaction D-glyceraldehyde 3-phosphate = dihydroxyacetone phosphate. It participates in carbohydrate biosynthesis; gluconeogenesis. Its pathway is carbohydrate degradation; glycolysis; D-glyceraldehyde 3-phosphate from glycerone phosphate: step 1/1. Involved in the gluconeogenesis. Catalyzes stereospecifically the conversion of dihydroxyacetone phosphate (DHAP) to D-glyceraldehyde-3-phosphate (G3P). In Cytophaga hutchinsonii (strain ATCC 33406 / DSM 1761 / CIP 103989 / NBRC 15051 / NCIMB 9469 / D465), this protein is Triosephosphate isomerase.